The following is a 691-amino-acid chain: ERI1 exoribonuclease 2 (691 aa).

The Exonuclease domain maps to 37–226; that stretch reads LIVIDFESTC…DDSRNTALLA (190 aa). Positions 41, 43, and 156 each coordinate Mg(2+). Residue Glu-43 is the Proton acceptor of the active site. Position 43 (Glu-43) interacts with AMP. Residue His-213 is the Proton acceptor of the active site. His-213 is a binding site for AMP. Mg(2+) is bound at residue Asp-218. 4 residues coordinate Zn(2+): Cys-597, Cys-599, Cys-622, and Cys-634. A GRF-type zinc finger spans residues 597-643; the sequence is CKCGRRSKRLVVSNNGPNHGKVFYCCPIGKYQENRKCCGYFKWEQTL.

This sequence belongs to the ERI2 family. It depends on Mg(2+) as a cofactor.

The chain is ERI1 exoribonuclease 2 (ERI2) from Homo sapiens (Human).